A 348-amino-acid polypeptide reads, in one-letter code: Tetraacyldisaccharide 4'-kinase (348 aa).

54–61 (TVGGAGKT) lines the ATP pocket.

The protein belongs to the LpxK family.

It catalyses the reaction a lipid A disaccharide + ATP = a lipid IVA + ADP + H(+). It functions in the pathway glycolipid biosynthesis; lipid IV(A) biosynthesis; lipid IV(A) from (3R)-3-hydroxytetradecanoyl-[acyl-carrier-protein] and UDP-N-acetyl-alpha-D-glucosamine: step 6/6. In terms of biological role, transfers the gamma-phosphate of ATP to the 4'-position of a tetraacyldisaccharide 1-phosphate intermediate (termed DS-1-P) to form tetraacyldisaccharide 1,4'-bis-phosphate (lipid IVA). The chain is Tetraacyldisaccharide 4'-kinase from Agrobacterium fabrum (strain C58 / ATCC 33970) (Agrobacterium tumefaciens (strain C58)).